The sequence spans 401 residues: Phosphoglycerate kinase (401 aa).

Substrate is bound by residues 24–26 (DFN), R40, 63–66 (HFGR), R122, and R155. Residues K206, G297, E328, and 357–360 (GGDS) each bind ATP.

It belongs to the phosphoglycerate kinase family. As to quaternary structure, monomer.

Its subcellular location is the cytoplasm. The catalysed reaction is (2R)-3-phosphoglycerate + ATP = (2R)-3-phospho-glyceroyl phosphate + ADP. It functions in the pathway carbohydrate degradation; glycolysis; pyruvate from D-glyceraldehyde 3-phosphate: step 2/5. This is Phosphoglycerate kinase from Gloeothece citriformis (strain PCC 7424) (Cyanothece sp. (strain PCC 7424)).